The sequence spans 53 residues: uncharacterized protein (53 aa).

The span at 14–33 shows a compositional bias: low complexity; the sequence is SPSSLNNNNNINSKSLQINS. Residues 14–53 are disordered; the sequence is SPSSLNNNNNINSKSLQINSENKSKIQNNNPLGNKGGVQF.

This is an uncharacterized protein from Dictyostelium discoideum (Social amoeba).